A 259-amino-acid chain; its full sequence is Phosphatidylinositol transfer protein 2 (259 aa).

A coiled-coil region spans residues leucine 231 to lysine 259.

Belongs to the PtdIns transfer protein family. PI transfer class IIA subfamily.

It is found in the cytoplasm. It localises to the golgi apparatus. Its function is as follows. Catalyzes the transfer of PtdIns and phosphatidylcholine between membranes. The chain is Phosphatidylinositol transfer protein 2 (pitB) from Dictyostelium discoideum (Social amoeba).